The primary structure comprises 156 residues: uncharacterized protein (156 aa).

Residues 43-84 (LKIDENEVKLEISVEKLKNLSRVCENIEQVVDKVVEELRYAL) are a coiled coil.

This is an uncharacterized protein from Aquifex aeolicus (strain VF5).